The sequence spans 196 residues: MASTTSTLSLSWSNSFHSFAGAISEPQKSPENCRVMLPIVAQKKVKKIRKIILKEDIPDLGKKGQLLDVRAGFLRNFLLPLGKAEVVTPLLLKEMKMEDERIEAEKKRVKEEAQQLARMFETVGAFKVKRKGGKGKQIFGSVTAQDLVDIIKAQLQRDVDKKVVFLPDIRETGEYIAELKLHPDVTAQVRVTVFAN.

Residues 1-41 constitute a chloroplast transit peptide; the sequence is MASTTSTLSLSWSNSFHSFAGAISEPQKSPENCRVMLPIVA.

Component of the chloroplast large ribosomal subunit (LSU). Mature 70S chloroplast ribosomes of higher plants consist of a small (30S) and a large (50S) subunit. The 30S small subunit contains 1 molecule of ribosomal RNA (16S rRNA) and 24 different proteins. The 50S large subunit contains 3 rRNA molecules (23S, 5S and 4.5S rRNA) and 33 different proteins.

It localises to the plastid. Its subcellular location is the chloroplast. Its function is as follows. Component of the chloroplast ribosome (chloro-ribosome), a dedicated translation machinery responsible for the synthesis of chloroplast genome-encoded proteins, including proteins of the transcription and translation machinery and components of the photosynthetic apparatus. This is Large ribosomal subunit protein bL9c (RPL9) from Spinacia oleracea (Spinach).